Reading from the N-terminus, the 173-residue chain is Photosystem I assembly protein Ycf3 (173 aa).

3 TPR repeats span residues 35–68 (AYIYYRDGLAAQNNGDYSEALDYYNESLLLEENK), 72–105 (GETLKNMAIIYMSNGEEDRSIETYQKALEENPKQ), and 120–153 (GRFAEQNGDLDQRDMWFDKAAQVWSKAVRLYPGG).

Belongs to the Ycf3 family.

Its subcellular location is the cellular thylakoid membrane. In terms of biological role, essential for the assembly of the photosystem I (PSI) complex. May act as a chaperone-like factor to guide the assembly of the PSI subunits. This chain is Photosystem I assembly protein Ycf3, found in Prochlorococcus marinus subsp. pastoris (strain CCMP1986 / NIES-2087 / MED4).